Consider the following 481-residue polypeptide: 4-O-methyl-glucuronoyl methylesterase (481 aa).

Positions 1–21 (MVSQTVVSSLLVVLGAAGVRA) are cleaved as a signal peptide. Residues 23-59 (QRQSLWGQCGGSGWSGPTLCVDGAWCNPQNQWYHQCI) form the CBM1 domain. 3 disulfides stabilise this stretch: Cys-108/Cys-143, Cys-292/Cys-428, and Cys-324/Cys-400. The short motif at 291-296 (GCSRNG) is the GXSYXG catalytic site motif element. Ser-293 (nucleophile) is an active-site residue. The substrate site is built by Lys-297, Gln-339, Glu-347, and Trp-391. His-427 acts as the Proton donor/acceptor in catalysis.

The protein belongs to the carbohydrate esterase 15 (CE15) family.

The protein localises to the secreted. It catalyses the reaction a 4-O-methyl-alpha-D-glucuronosyl ester derivative + H2O = 4-O-methyl-alpha-D-glucuronate derivative + an alcohol + H(+). Its function is as follows. Glucuronoyl esterase which may play a significant role in biomass degradation, as it is considered to disconnect hemicellulose from lignin through the hydrolysis of the ester bond between 4-O-methyl-D-glucuronic acid residues of glucuronoxylans and aromatic alcohols of lignin. In Podospora anserina (strain S / ATCC MYA-4624 / DSM 980 / FGSC 10383) (Pleurage anserina), this protein is 4-O-methyl-glucuronoyl methylesterase.